A 604-amino-acid chain; its full sequence is MLARAGLLCASLSPPHAANPCCSNPCQNQGVCMSIGFDQYMCDCSRTGFYGENCSTPEFLTRVKLLLKPTPNTVHYILTHFKGVWNIVNKIPFLADVIMKYVRTSRSHCIEPPPTYNVHYAYKSWEAFSNLSYYTRALPPVADDCPTPMGVKGKKELPDSKEIVEKFLLRRKFIPDPQGTNMMFAFFAQHFTHQFFKTDHKRGPGFTKGLGHGVDLSHVYGETLDRQHKLRLFKDGKMKYQVIDGEVYPPTVKDTQVEMIYPPHVPEHLRFAVGQEVFGLVPGLMMYATIWLREHNRVCDVLKQEQGEWDDERLFRRSRLILIGETIKIVIEDYVRHLSGYHFSLKFDPELLFNQQFQYQNRIAAEFNTLYHWHPLLPDTLQIDDQEYNFQQFVYNNSILLEHGLTQFGESFSRQIAGRVAGGRNVPAAVQQEQRASIDQSRQMKYQSLNEYRKRFSVKPYASFEELTGEKEMAGELKALYQDIDAMELYPALLVEKPRPDAIFGETMVEIGAPFSLKGLMGNPICSPDYWKPSHFGGEVGFKIINTASIQSLICNNVKGCPFTAFSVQDPQLTKTVTINGSSSHSGLDDINPTVLLKERSTEL.

An N-terminal signal peptide occupies residues 1-17 (MLARAGLLCASLSPPHA). Residues 18–55 (ANPCCSNPCQNQGVCMSIGFDQYMCDCSRTGFYGENCS) enclose the EGF-like domain. Disulfide bonds link cysteine 21-cysteine 32, cysteine 22-cysteine 145, cysteine 26-cysteine 42, and cysteine 44-cysteine 54. Residue asparagine 53 is glycosylated (N-linked (GlcNAc...) asparagine). Arginine 106 serves as a coordination point for substrate. N-linked (GlcNAc...) asparagine glycosylation occurs at asparagine 130. Histidine 193 serves as the catalytic Proton acceptor. Residue tyrosine 341 participates in substrate binding. Tyrosine 371 (for cyclooxygenase activity) is an active-site residue. Position 374 (histidine 374) interacts with heme b. An N-linked (GlcNAc...) asparagine glycan is attached at asparagine 396. S-nitrosocysteine is present on cysteine 526. A disulfide bridge links cysteine 555 with cysteine 561. The N-linked (GlcNAc...) asparagine glycan is linked to asparagine 580.

It belongs to the prostaglandin G/H synthase family. In terms of assembly, homodimer. The cofactor is heme b. S-nitrosylation by NOS2 (iNOS) activates enzyme activity. S-nitrosylation may take place on different Cys residues in addition to Cys-526.

It is found in the microsome membrane. It localises to the endoplasmic reticulum membrane. Its subcellular location is the nucleus inner membrane. The protein resides in the nucleus outer membrane. It carries out the reaction (5Z,8Z,11Z,14Z)-eicosatetraenoate + AH2 + 2 O2 = prostaglandin H2 + A + H2O. The enzyme catalyses (5Z,8Z,11Z,14Z)-eicosatetraenoate + 2 O2 = prostaglandin G2. The catalysed reaction is prostaglandin G2 + AH2 = prostaglandin H2 + A + H2O. It catalyses the reaction (5Z,8Z,11Z,14Z,17Z)-eicosapentaenoate + 2 O2 = prostaglandin G3. It carries out the reaction prostaglandin G3 + AH2 = prostaglandin H3 + A + H2O. The enzyme catalyses (8Z,11Z,14Z)-eicosatrienoate + 2 O2 = prostaglandin G1. The catalysed reaction is prostaglandin G1 + AH2 = prostaglandin H1 + A + H2O. It catalyses the reaction 2-(5Z,8Z,11Z,14Z)-eicosatetraenoyl-sn-glycero-3-phosphoethanolamine + 2 O2 = 2-(prostaglandin G2)-sn-glycero-3-phosphoethanolamine. It carries out the reaction 2-(prostaglandin G2)-sn-glycero-3-phosphoethanolamine + AH2 = 2-(prostaglandin H2)-sn-glycero-3-phosphoethanolamine + A + H2O. The enzyme catalyses 2-(5Z,8Z,11Z,14Z)-eicosatetraenoyl-sn-glycero-3-phosphocholine + 2 O2 = 2-(prostaglandin G2)-sn-glycero-3-phosphocholine. The catalysed reaction is 2-(prostaglandin G2)-sn-glycero-3-phosphocholine + AH2 = 2-(prostaglandin H2)-sn-glycero-3-phosphocholine + A + H2O. It catalyses the reaction (15S)-hydroperoxy-(5Z,8Z,11Z,13E)-eicosatetraenoate + AH2 = (15S)-hydroxy-(5Z,8Z,11Z,13E)-eicosatetraenoate + A + H2O. It carries out the reaction 2-(5Z,8Z,11Z,14Z)-eicosatetraenoyl-sn-glycero-3-phosphocholine + AH2 + O2 = 2-[(15S)-hydroxy-(5Z,8Z,11Z,13E)-eicosatetraenoyl]-sn-glycero-3-phosphocholine + A + H2O. The enzyme catalyses 2-(5Z,8Z,11Z,14Z)-eicosatetraenoyl-sn-glycero-3-phosphocholine + AH2 + O2 = 2-[(15R)-hydroxy-(5Z,8Z,11Z,13E)-eicosatetraenoyl]-sn-glycero-3-phosphocholine + A + H2O. The catalysed reaction is 2-(5Z,8Z,11Z,14Z)-eicosatetraenoyl-sn-glycero-3-phosphocholine + AH2 + O2 = 2-[(11R)-hydroxy-(5Z,8Z,12E,14Z)-eicosatetraenoyl]-sn-glycero-3-phosphocholine + A + H2O. It catalyses the reaction (9Z,12Z)-octadecadienoate + AH2 + O2 = 9-hydroxy-(10E,12Z)-octadecadienoate + A + H2O. It carries out the reaction (9Z,12Z)-octadecadienoate + AH2 + O2 = 13-hydroxy-(9Z,11E)-octadecadienoate + A + H2O. The enzyme catalyses (5Z,8Z,11Z,14Z)-eicosatetraenoate + AH2 + O2 = (15R)-hydroxy-(5Z,8Z,11Z,13E)-eicosatetraenoate + A + H2O. The catalysed reaction is (5Z,8Z,11Z,14Z)-eicosatetraenoate + AH2 + O2 = (11R)-hydroxy-(5Z,8Z,12E,14Z)-eicosatetraenoate + A + H2O. It catalyses the reaction (5Z,8Z,11Z,14Z,17Z)-eicosapentaenoate + AH2 + O2 = (11R)-hydroxy-(5Z,8Z,12E,14Z,17Z)-eicosapentaenoate + A + H2O. It carries out the reaction (5Z,8Z,11Z,14Z,17Z)-eicosapentaenoate + AH2 + O2 = (18S)-hydroxy-(5Z,8Z,11Z,14Z,16E)-eicosapentaenoate + A + H2O. The enzyme catalyses (5Z,8Z,11Z,14Z,17Z)-eicosapentaenoate + AH2 + O2 = (18R)-hydroxy-(5Z,8Z,11Z,14Z,16E)-eicosapentaenoate + A + H2O. The catalysed reaction is (5Z,8Z,11Z,14Z,17Z)-eicosapentaenoate + AH2 + O2 = (15R)-hydroxy-(5Z,8Z,11Z,13E,17Z)-eicosapentaenoate + A + H2O. It catalyses the reaction (5Z,8Z,11Z,14Z,17Z)-eicosapentaenoate + AH2 + O2 = (15S)-hydroxy-(5Z,8Z,11Z,13E,17Z)-eicosapentaenoate + A + H2O. It carries out the reaction (7Z,10Z,13Z,16Z,19Z)-docosapentaenoate + AH2 + O2 = 13R-hydroxy-(7Z,10Z,14E,16Z,19Z)-docosapentaenoate + A + H2O. The enzyme catalyses (4Z,7Z,10Z,13Z,16Z,19Z)-docosahexaenoate + AH2 + O2 = 13-hydroxy-(4Z,7Z,10Z,14E,16Z,19Z)-docosahexaenoate + A + H2O. The catalysed reaction is (5S)-hydroxy-(6E,8Z,11Z,14Z)-eicosatetraenoate + AH2 + O2 = (5S,15R)-dihydroxy-(6E,8Z,11Z,13E)-eicosatetraenoate + A + H2O. It catalyses the reaction (4Z,7Z,10Z,13Z,16Z,19Z)-docosahexaenoate + AH2 + O2 = 17R-hydroxy-(4Z,7Z,10Z,13Z,15E,19Z)-docosahexaenoate + A + H2O. It carries out the reaction (5S)-hydroxy-(6E,8Z,11Z,14Z)-eicosatetraenoate + AH2 + O2 = (5S,15S)-dihydroxy-(6E,8Z,11Z,13E)-eicosatetraenoate + A + H2O. The enzyme catalyses (5S)-hydroxy-(6E,8Z,11Z,14Z)-eicosatetraenoate + AH2 + O2 = (5S,11R)-dihydroxy-(6E,8Z,12E,14Z)-eicosatetraenoate + A + H2O. The catalysed reaction is 2-(5Z,8Z,11Z,14Z-eicosatetraenoyl)-glycerol + 2 O2 = 2-glyceryl-prostaglandin G2. It catalyses the reaction 2-glyceryl-prostaglandin G2 + AH2 = 2-glyceryl-prostaglandin H2 + A + H2O. It carries out the reaction (5Z,8Z,11Z,14Z)-eicosatetraenoate + O2 = (15R)-hydroperoxy-(5Z,8Z,11Z,13E)-eicosatetraenoate. The enzyme catalyses (5Z,8Z,11Z,14Z)-eicosatetraenoate + O2 = 11R-hydroperoxy-(5Z,8Z,12E,14Z)-eicosatetraenoate. The catalysed reaction is (9Z,12Z)-octadecadienoate + AH2 + O2 = (9R)-hydroxy-(10E,12Z)-octadecadienoate + A + H2O. It catalyses the reaction (9Z,12Z)-octadecadienoate + AH2 + O2 = (9S)-hydroxy-(10E,12Z)-octadecadienoate + A + H2O. It carries out the reaction (9Z,12Z)-octadecadienoate + AH2 + O2 = (13S)-hydroxy-(9Z,11E)-octadecadienoate + A + H2O. The enzyme catalyses (9Z,12Z)-octadecadienoate + AH2 + O2 = (13R)-hydroxy-(9Z,11E)-octadecadienoate + A + H2O. Its pathway is lipid metabolism; prostaglandin biosynthesis. Its function is as follows. Dual cyclooxygenase and peroxidase in the biosynthesis pathway of prostanoids, a class of C20 oxylipins mainly derived from arachidonate ((5Z,8Z,11Z,14Z)-eicosatetraenoate, AA, C20:4(n-6)), with a particular role in the inflammatory response. The cyclooxygenase activity oxygenates AA to the hydroperoxy endoperoxide prostaglandin G2 (PGG2), and the peroxidase activity reduces PGG2 to the hydroxy endoperoxide prostaglandin H2 (PGH2), the precursor of all 2-series prostaglandins and thromboxanes. This complex transformation is initiated by abstraction of hydrogen at carbon 13 (with S-stereochemistry), followed by insertion of molecular O2 to form the endoperoxide bridge between carbon 9 and 11 that defines prostaglandins. The insertion of a second molecule of O2 (bis-oxygenase activity) yields a hydroperoxy group in PGG2 that is then reduced to PGH2 by two electrons. Similarly catalyzes successive cyclooxygenation and peroxidation of dihomo-gamma-linoleate (DGLA, C20:3(n-6)) and eicosapentaenoate (EPA, C20:5(n-3)) to corresponding PGH1 and PGH3, the precursors of 1- and 3-series prostaglandins. In an alternative pathway of prostanoid biosynthesis, converts 2-arachidonoyl lysophopholipids to prostanoid lysophopholipids, which are then hydrolyzed by intracellular phospholipases to release free prostanoids. Metabolizes 2-arachidonoyl glycerol yielding the glyceryl ester of PGH2, a process that can contribute to pain response. Generates lipid mediators from n-3 and n-6 polyunsaturated fatty acids (PUFAs) via a lipoxygenase-type mechanism. Oxygenates PUFAs to hydroperoxy compounds and then reduces them to corresponding alcohols. Plays a role in the generation of resolution phase interaction products (resolvins) during both sterile and infectious inflammation. Metabolizes docosahexaenoate (DHA, C22:6(n-3)) to 17R-HDHA, a precursor of the D-series resolvins (RvDs). As a component of the biosynthetic pathway of E-series resolvins (RvEs), converts eicosapentaenoate (EPA, C20:5(n-3)) primarily to 18S-HEPE that is further metabolized by ALOX5 and LTA4H to generate 18S-RvE1 and 18S-RvE2. In vascular endothelial cells, converts docosapentaenoate (DPA, C22:5(n-3)) to 13R-HDPA, a precursor for 13-series resolvins (RvTs) shown to activate macrophage phagocytosis during bacterial infection. In activated leukocytes, contributes to oxygenation of hydroxyeicosatetraenoates (HETE) to diHETES (5,15-diHETE and 5,11-diHETE). Can also use linoleate (LA, (9Z,12Z)-octadecadienoate, C18:2(n-6)) as substrate and produce hydroxyoctadecadienoates (HODEs) in a regio- and stereospecific manner, being (9R)-HODE ((9R)-hydroxy-(10E,12Z)-octadecadienoate) and (13S)-HODE ((13S)-hydroxy-(9Z,11E)-octadecadienoate) its major products. During neuroinflammation, plays a role in neuronal secretion of specialized preresolving mediators (SPMs) 15R-lipoxin A4 that regulates phagocytic microglia. The polypeptide is Prostaglandin G/H synthase 2 (PTGS2) (Neovison vison (American mink)).